A 256-amino-acid chain; its full sequence is Small ribosomal subunit protein eS1 (256 aa).

The span at 1–18 (MAVGKNKRLSKGKKGLKK) shows a compositional bias: basic residues. Residues 1 to 22 (MAVGKNKRLSKGKKGLKKKTQD) are disordered. Position 2 is an N-acetylalanine; partial (A2).

The protein belongs to the eukaryotic ribosomal protein eS1 family. In terms of assembly, component of the small ribosomal subunit. Mature ribosomes consist of a small (40S) and a large (60S) subunit. The 40S subunit contains about 33 different proteins and 1 molecule of RNA (18S). The 60S subunit contains about 49 different proteins and 3 molecules of RNA (25S, 5.8S and 5S).

It localises to the cytoplasm. This is Small ribosomal subunit protein eS1 from Pyricularia oryzae (strain Y34) (Rice blast fungus).